We begin with the raw amino-acid sequence, 146 residues long: Gonadotropin subunit beta-2 (146 aa).

The signal sequence occupies residues 1–28; sequence TGTPVKILVVRNILLLLFCLVVLLVFAQ. 6 disulfide bridges follow: Cys35-Cys83, Cys49-Cys98, Cys52-Cys136, Cys60-Cys114, Cys64-Cys116, and Cys119-Cys126. N-linked (GlcNAc...) asparagine glycosylation occurs at Asn39.

This sequence belongs to the glycoprotein hormones subunit beta family. In terms of assembly, heterodimer of an alpha and a beta chain.

The protein resides in the secreted. Its function is as follows. Involved in gametogenesis and steroidogenesis. This chain is Gonadotropin subunit beta-2 (cgbb), found in Ctenopharyngodon idella (Grass carp).